The chain runs to 118 residues: Protein BEX4 (118 aa).

Positions 14-50 are disordered; sequence VEKDKKNKKGGKASKQSEEESHHLEEVENKKPGGNVR. Residues 28-44 are compositionally biased toward basic and acidic residues; that stretch reads KQSEEESHHLEEVENKK. Positions 30–88 are interaction with SIRT2; sequence SEEESHHLEEVENKKPGGNVRRKVRRLVPNFLWAIPNRHVDHSEGGEEVGRFVGQVMEA. Residues 30–118 form an interaction with alpha-tubulin region; sequence SEEESHHLEE…DNHYDFCLIP (89 aa). C115 is a Zn(2+) binding site.

It belongs to the BEX family. Interacts with alpha-tubulin. Interacts with SIRT2. Ubiquitinated and degraded by the proteasome.

It localises to the cytoplasm. It is found in the cytoskeleton. Its subcellular location is the spindle pole. The protein localises to the nucleus. May play a role in microtubule deacetylation by negatively regulating the SIRT2 deacetylase activity toward alpha-tubulin and thereby participate in the control of cell cycle progression and genomic stability. In absence of reductive stress, acts as a pseudosubstrate for the CRL2(FEM1B) complex: associates with FEM1B via zinc, thereby preventing association between FEM1B and its substrates. In Rattus norvegicus (Rat), this protein is Protein BEX4.